The following is a 407-amino-acid chain: Argininosuccinate synthase (407 aa).

ATP contacts are provided by residues 12–20 and A39; that span reads AYSGGLDTS. The L-citrulline site is built by Y92 and S97. G122 is a binding site for ATP. 3 residues coordinate L-aspartate: T124, N128, and D129. L-citrulline is bound at residue N128. L-citrulline is bound by residues R132, S183, S192, E268, and Y280.

The protein belongs to the argininosuccinate synthase family. Type 1 subfamily. Homotetramer.

The protein localises to the cytoplasm. The catalysed reaction is L-citrulline + L-aspartate + ATP = 2-(N(omega)-L-arginino)succinate + AMP + diphosphate + H(+). The protein operates within amino-acid biosynthesis; L-arginine biosynthesis; L-arginine from L-ornithine and carbamoyl phosphate: step 2/3. This is Argininosuccinate synthase from Caulobacter sp. (strain K31).